Reading from the N-terminus, the 736-residue chain is Probable potassium transport system protein Kup 2 (736 aa).

Helical transmembrane passes span 1 to 21, 42 to 62, 84 to 104, 126 to 146, 156 to 176, 204 to 224, 239 to 259, 287 to 307, 334 to 354, 364 to 384, 390 to 410, and 414 to 434; these read MAIV…LYTA, MLSL…VLIA, GAWL…DSVL, LFDE…VILF, IGKV…IVGV, AAGI…EALY, WPFI…WMLA, AVIL…TGAF, LYIP…LAIF, YGLA…VYLW, VGAI…FIAS, and FLHG…VMYT. Disordered regions lie at residues 649-678 and 693-736; these read TDTA…DTTS and AEAR…KQKR. Composition is skewed to low complexity over residues 660 to 677 and 700 to 709; these read PTRA…MDTT and EAAAADAPAE. Positions 710 to 721 are enriched in basic and acidic residues; it reads QGDKGDKGKAEN.

It belongs to the HAK/KUP transporter (TC 2.A.72) family.

The protein resides in the cell membrane. The enzyme catalyses K(+)(in) + H(+)(in) = K(+)(out) + H(+)(out). Its function is as follows. Transport of potassium into the cell. Likely operates as a K(+):H(+) symporter. The chain is Probable potassium transport system protein Kup 2 from Bifidobacterium longum (strain NCC 2705).